The chain runs to 315 residues: Large ribosomal subunit protein uL10 (315 aa).

Over residues 285-294 (AAAPAASAAP) the composition is skewed to low complexity. A disordered region spans residues 285 to 315 (AAAPAASAAPAKEEKEESEESDDDMGFGLFD). Residues 300–309 (EESEESDDDM) are compositionally biased toward acidic residues.

This sequence belongs to the universal ribosomal protein uL10 family. In terms of assembly, P0 forms a pentameric complex by interaction with dimers of P1 and P2. In terms of processing, phosphorylated.

Its function is as follows. Ribosomal protein P0 is the functional equivalent of E.coli protein L10. This is Large ribosomal subunit protein uL10 (RPLP0) from Lithobates sylvaticus (Wood frog).